The following is a 409-amino-acid chain: uncharacterized protein (409 aa).

The next 4 helical transmembrane spans lie at 20 to 40 (ILTM…VSML), 283 to 303 (FALL…IGVM), 344 to 364 (IGGI…TVIF), and 372 to 392 (IPAV…FGLL).

This sequence belongs to the ABC-4 integral membrane protein family.

The protein localises to the cell membrane. This is an uncharacterized protein from Bacillus subtilis (strain 168).